Reading from the N-terminus, the 277-residue chain is 2,3,4,5-tetrahydropyridine-2,6-dicarboxylate N-succinyltransferase (277 aa).

Positions 106 and 143 each coordinate substrate.

Belongs to the transferase hexapeptide repeat family. In terms of assembly, homotrimer.

It localises to the cytoplasm. The enzyme catalyses (S)-2,3,4,5-tetrahydrodipicolinate + succinyl-CoA + H2O = (S)-2-succinylamino-6-oxoheptanedioate + CoA. It functions in the pathway amino-acid biosynthesis; L-lysine biosynthesis via DAP pathway; LL-2,6-diaminopimelate from (S)-tetrahydrodipicolinate (succinylase route): step 1/3. The polypeptide is 2,3,4,5-tetrahydropyridine-2,6-dicarboxylate N-succinyltransferase (Xylella fastidiosa (strain Temecula1 / ATCC 700964)).